Here is a 139-residue protein sequence, read N- to C-terminus: Large ribosomal subunit protein uL16 (139 aa).

The protein belongs to the universal ribosomal protein uL16 family. Part of the 50S ribosomal subunit.

Binds 23S rRNA and is also seen to make contacts with the A and possibly P site tRNAs. This Gloeothece citriformis (strain PCC 7424) (Cyanothece sp. (strain PCC 7424)) protein is Large ribosomal subunit protein uL16.